Consider the following 716-residue polypeptide: DEAD-box ATP-dependent RNA helicase 31 (716 aa).

Residues 99 to 188 (GILKSDDEDE…LRLEDESSDE (90 aa)) form a disordered region. The span at 110-121 (DRSRGRNQEKRG) shows a compositional bias: basic and acidic residues. Residues 144-153 (SRIQGKSSEA) are compositionally biased toward polar residues. Positions 155–188 (FRGRKETSFSRDREDEKGLRKREDLRLEDESSDE) are enriched in basic and acidic residues. The Q motif motif lies at 248–276 (TRFDHYPLSPLSLKAIKDAGYETMTVVQE). The Helicase ATP-binding domain occupies 279 to 462 (LPIILKGKDV…LVALRRDHEF (184 aa)). Residue 292–299 (AKTGTGKT) participates in ATP binding. A DEAD box motif is present at residues 410–413 (DEAD). One can recognise a Helicase C-terminal domain in the interval 497–643 (LREHIMGNVD…IDPETVKKVQ (147 aa)).

This sequence belongs to the DEAD box helicase family.

It catalyses the reaction ATP + H2O = ADP + phosphate + H(+). This chain is DEAD-box ATP-dependent RNA helicase 31 (RH31), found in Arabidopsis thaliana (Mouse-ear cress).